Reading from the N-terminus, the 425-residue chain is Enolase (425 aa).

Glutamine 162 contacts (2R)-2-phosphoglycerate. The active-site Proton donor is glutamate 204. Aspartate 241, glutamate 282, and aspartate 309 together coordinate Mg(2+). (2R)-2-phosphoglycerate-binding residues include lysine 334, arginine 363, serine 364, and lysine 385. Lysine 334 acts as the Proton acceptor in catalysis.

It belongs to the enolase family. Mg(2+) serves as cofactor.

The protein resides in the cytoplasm. It is found in the secreted. It localises to the cell surface. It catalyses the reaction (2R)-2-phosphoglycerate = phosphoenolpyruvate + H2O. It functions in the pathway carbohydrate degradation; glycolysis; pyruvate from D-glyceraldehyde 3-phosphate: step 4/5. Catalyzes the reversible conversion of 2-phosphoglycerate (2-PG) into phosphoenolpyruvate (PEP). It is essential for the degradation of carbohydrates via glycolysis. This Corynebacterium aurimucosum (strain ATCC 700975 / DSM 44827 / CIP 107346 / CN-1) (Corynebacterium nigricans) protein is Enolase.